The following is a 176-amino-acid chain: Mitochondrial inner membrane protein Mpv17 (176 aa).

The next 4 helical transmembrane spans lie at 18–38 (VQVLTAGSLMGLGDIISQQLV), 57–77 (LGCGFVGPVVGGWYRVLDHLI), 94–114 (GGFAPCFLGCFLPLVGVLNGM), and 131–151 (LITNYYLWPAVQLANFYLVPL).

Belongs to the peroxisomal membrane protein PXMP2/4 family.

Its subcellular location is the mitochondrion inner membrane. Functionally, non-selective channel that modulates the membrane potential under normal conditions and oxidative stress, and is involved in mitochondrial homeostasis. Involved in mitochondrial deoxynucleoside triphosphates (dNTP) pool homeostasis and mitochondrial DNA (mtDNA) maintenance. May be involved in the regulation of reactive oxygen species metabolism and the control of oxidative phosphorylation. The protein is Mitochondrial inner membrane protein Mpv17 of Rattus norvegicus (Rat).